Here is a 303-residue protein sequence, read N- to C-terminus: Trans-enoyl reductase tazE (303 aa).

A disordered region spans residues 1-26 (MTAEHDAAILPKPGGPLAVGKRATPE). Residue 44-49 (CDYYQR) participates in NADP(+) binding. Position 136–143 (136–143 (LAVLTALT)) interacts with substrate. NADP(+) is bound by residues 170–173 (SSSV), 193–196 (SPKH), Tyr211, and 246–247 (LD). Substrate is bound at residue 265–269 (VLPEC).

It belongs to the zinc-containing alcohol dehydrogenase family.

Its pathway is secondary metabolite biosynthesis. Trans-enoyl reductase; part of the gene cluster that mediates the biosynthesis of azaterrilone A and other azaphilones, a class of fungal metabolites characterized by a highly oxygenated pyrano-quinone bicyclic core and exhibiting a broad range of bioactivities. The first step of the pathway begins with the non-reducing polyketide synthase tazA that assembles one acetyl-CoA starter unit, five malonyl-CoA units, and catalyzes a series of Claisen condensations, methylation, PT-mediated cyclization, and finally releases the first hexaketide precursor through the R-domain. The tazA product then undergoes reduction on its terminal ketone and the following pyran-ring formation by yet undetermined enzyme(s). Dehydration and enoyl reduction, possibly involving the trans-enoyl reductase tazE leads to the next intermediate. TazD is predicted as an acetyltransferase and might catalyze the acetylation steps leading to the synthesis of azaterrilone A. Azaterrilone A is not the final product of the taz pathway and both the highly reducing polyketide synthase tazB and the dual enzyme tazHJ catalyze late steps of the pathway, leading to the production of the 2 final stereoisomers that contain additional polyketide modification whose structures have still to be determined. The chain is Trans-enoyl reductase tazE from Aspergillus terreus (strain NIH 2624 / FGSC A1156).